Consider the following 258-residue polypeptide: Type III pantothenate kinase (258 aa).

6–13 (DVGNTNIV) provides a ligand contact to ATP. Residues Tyr100 and 107–110 (GADR) each bind substrate. Asp109 acts as the Proton acceptor in catalysis. K(+) is bound at residue Asp129. Thr132 lines the ATP pocket. Thr184 is a substrate binding site.

Belongs to the type III pantothenate kinase family. As to quaternary structure, homodimer. NH4(+) serves as cofactor. K(+) is required as a cofactor.

The protein resides in the cytoplasm. The enzyme catalyses (R)-pantothenate + ATP = (R)-4'-phosphopantothenate + ADP + H(+). It functions in the pathway cofactor biosynthesis; coenzyme A biosynthesis; CoA from (R)-pantothenate: step 1/5. Functionally, catalyzes the phosphorylation of pantothenate (Pan), the first step in CoA biosynthesis. This chain is Type III pantothenate kinase, found in Desulfitobacterium hafniense (strain DSM 10664 / DCB-2).